We begin with the raw amino-acid sequence, 439 residues long: Histidinol dehydrogenase (439 aa).

The NAD(+) site is built by Tyr132, Gln194, and Asn217. The substrate site is built by Ser244, Gln266, and His269. Gln266 and His269 together coordinate Zn(2+). Catalysis depends on proton acceptor residues Glu335 and His336. His336, Asp369, Glu423, and His428 together coordinate substrate. Position 369 (Asp369) interacts with Zn(2+). Position 428 (His428) interacts with Zn(2+).

Belongs to the histidinol dehydrogenase family. Zn(2+) is required as a cofactor.

The enzyme catalyses L-histidinol + 2 NAD(+) + H2O = L-histidine + 2 NADH + 3 H(+). It participates in amino-acid biosynthesis; L-histidine biosynthesis; L-histidine from 5-phospho-alpha-D-ribose 1-diphosphate: step 9/9. Functionally, catalyzes the sequential NAD-dependent oxidations of L-histidinol to L-histidinaldehyde and then to L-histidine. The polypeptide is Histidinol dehydrogenase (his2) (Schizosaccharomyces pombe (strain 972 / ATCC 24843) (Fission yeast)).